A 284-amino-acid polypeptide reads, in one-letter code: Bifunctional protein FolD (284 aa).

Residue Gly-166–Ser-168 coordinates NADP(+).

It belongs to the tetrahydrofolate dehydrogenase/cyclohydrolase family. In terms of assembly, homodimer.

The catalysed reaction is (6R)-5,10-methylene-5,6,7,8-tetrahydrofolate + NADP(+) = (6R)-5,10-methenyltetrahydrofolate + NADPH. It carries out the reaction (6R)-5,10-methenyltetrahydrofolate + H2O = (6R)-10-formyltetrahydrofolate + H(+). It functions in the pathway one-carbon metabolism; tetrahydrofolate interconversion. Catalyzes the oxidation of 5,10-methylenetetrahydrofolate to 5,10-methenyltetrahydrofolate and then the hydrolysis of 5,10-methenyltetrahydrofolate to 10-formyltetrahydrofolate. The sequence is that of Bifunctional protein FolD from Legionella pneumophila (strain Paris).